The sequence spans 122 residues: Small ribosomal subunit protein uS12cz/uS12cy (122 aa).

It belongs to the universal ribosomal protein uS12 family. Part of the 30S ribosomal subunit.

It is found in the plastid. The protein resides in the chloroplast. In terms of biological role, with S4 and S5 plays an important role in translational accuracy. Located at the interface of the 30S and 50S subunits. The protein is Small ribosomal subunit protein uS12cz/uS12cy (rps12-A) of Triticum aestivum (Wheat).